The following is a 400-amino-acid chain: MLSNSQGQSPPVPFPAPAPPPQPPTPALPHPPAQPPPPPPQQFPQFHVKSGLQIKKNAIIDDYKVTSQVLGLGINGKVLQIFNKRTQEKFALKMLQDCPKARREVELHWRASQCPHIVRIVDVYENLYAGRKCLLIVMECLDGGELFSRIQDRGDQAFTEREASEIMKSIGEAIQYLHSINIAHRDVKPENLLYTSKRPNAILKLTDFGFAKETTSHNSLTTPCYTPYYVAPEVLGPEKYDKSCDMWSLGVIMYILLCGYPPFYSNHGLAISPGMKTRIRMGQYEFPNPEWSEVSEEVKMLIRNLLKTEPTQRMTITEFMNHPWIMQSTKVPQTPLHTSRVLKEDKERWEDVKEEMTSALATMRVDYEQIKIKKIEDASNPLLLKRRKKARALEAAALAH.

Residues 1-43 (MLSNSQGQSPPVPFPAPAPPPQPPTPALPHPPAQPPPPPPQQF) form a disordered region. A Phosphoserine modification is found at Ser-9. The span at 10–42 (PPVPFPAPAPPPQPPTPALPHPPAQPPPPPPQQ) shows a compositional bias: pro residues. The residue at position 25 (Thr-25) is a Phosphothreonine. The 262-residue stretch at 64–325 (KVTSQVLGLG…ITEFMNHPWI (262 aa)) folds into the Protein kinase domain. ATP is bound by residues 70 to 78 (LGLGINGKV) and Lys-93. Residue 139–141 (ECL) coordinates staurosporine. Residue Asp-186 is the Proton acceptor of the active site. Thr-222 bears the Phosphothreonine; by MAPK14 mark. Phosphoserine; by MAPK14 is present on Ser-272. The residue at position 328 (Ser-328) is a Phosphoserine; by autocatalysis. The interval 328–364 (STKVPQTPLHTSRVLKEDKERWEDVKEEMTSALATMR) is autoinhibitory helix. A Phosphothreonine; by MAPK14 modification is found at Thr-334. A Glycyl lysine isopeptide (Lys-Gly) (interchain with G-Cter in SUMO) cross-link involves residue Lys-353. The Nuclear export signal (NES) signature appears at 356 to 365 (MTSALATMRV). The p38 MAPK-binding site stretch occupies residues 366–390 (DYEQIKIKKIEDASNPLLLKRRKKA). Short sequence motifs (bipartite nuclear localization signal) lie at residues 371 to 374 (KIKK) and 385 to 389 (KRRKK).

The protein belongs to the protein kinase superfamily. CAMK Ser/Thr protein kinase family. Heterodimer with p38-alpha/MAPK14; this heterodimer forms a stable complex: molecules are positioned 'face to face' so that the ATP-binding sites of both kinases are at the heterodimer interface. Interacts with PHC2. Interacts with HSF1. In terms of processing, sumoylation inhibits the protein kinase activity. Post-translationally, phosphorylated and activated by MAP kinase p38-alpha/MAPK14 at Thr-222, Ser-272 and Thr-334. As to expression, expressed in all tissues examined.

The protein localises to the cytoplasm. The protein resides in the nucleus. It catalyses the reaction L-seryl-[protein] + ATP = O-phospho-L-seryl-[protein] + ADP + H(+). The enzyme catalyses L-threonyl-[protein] + ATP = O-phospho-L-threonyl-[protein] + ADP + H(+). Activated following phosphorylation by p38-alpha/MAPK14 following various stresses. Inhibited following sumoylation. Specifically inhibited by pyrrolopyridine inhibitors. In terms of biological role, stress-activated serine/threonine-protein kinase involved in cytokine production, endocytosis, reorganization of the cytoskeleton, cell migration, cell cycle control, chromatin remodeling, DNA damage response and transcriptional regulation. Following stress, it is phosphorylated and activated by MAP kinase p38-alpha/MAPK14, leading to phosphorylation of substrates. Phosphorylates serine in the peptide sequence, Hyd-X-R-X(2)-S, where Hyd is a large hydrophobic residue. Phosphorylates ALOX5, CDC25B, CDC25C, CEP131, ELAVL1, HNRNPA0, HSP27/HSPB1, KRT18, KRT20, LIMK1, LSP1, PABPC1, PARN, PDE4A, RCSD1, RPS6KA3, TAB3 and TTP/ZFP36. Phosphorylates HSF1; leading to the interaction with HSP90 proteins and inhibiting HSF1 homotrimerization, DNA-binding and transactivation activities. Mediates phosphorylation of HSP27/HSPB1 in response to stress, leading to the dissociation of HSP27/HSPB1 from large small heat-shock protein (sHsps) oligomers and impairment of their chaperone activities and ability to protect against oxidative stress effectively. Involved in inflammatory response by regulating tumor necrosis factor (TNF) and IL6 production post-transcriptionally: acts by phosphorylating AU-rich elements (AREs)-binding proteins ELAVL1, HNRNPA0, PABPC1 and TTP/ZFP36, leading to the regulation of the stability and translation of TNF and IL6 mRNAs. Phosphorylation of TTP/ZFP36, a major post-transcriptional regulator of TNF, promotes its binding to 14-3-3 proteins and reduces its ARE mRNA affinity, leading to inhibition of dependent degradation of ARE-containing transcripts. Phosphorylates CEP131 in response to cellular stress induced by ultraviolet irradiation which promotes binding of CEP131 to 14-3-3 proteins and inhibits formation of novel centriolar satellites. Also involved in late G2/M checkpoint following DNA damage through a process of post-transcriptional mRNA stabilization: following DNA damage, relocalizes from nucleus to cytoplasm and phosphorylates HNRNPA0 and PARN, leading to stabilization of GADD45A mRNA. Involved in toll-like receptor signaling pathway (TLR) in dendritic cells: required for acute TLR-induced macropinocytosis by phosphorylating and activating RPS6KA3. The polypeptide is MAP kinase-activated protein kinase 2 (MAPKAPK2) (Homo sapiens (Human)).